A 296-amino-acid polypeptide reads, in one-letter code: Probable AP endonuclease (296 aa).

Cys-16 and Cys-20 are oxidised to a cystine. Zn(2+)-binding residues include His-78, His-115, Glu-142, His-182, His-218, Asp-231, His-233, and Glu-271.

The protein belongs to the AP endonuclease 2 family. Zn(2+) serves as cofactor.

It localises to the host nucleus. It is found in the host cytoplasm. Its subcellular location is the virion. Its function is as follows. Endonuclease of the viral base excision repair system that catalyzes DNA cleavage reaction at the apurinic or apyrimidinic sites (AP sites). Cleaves phosphodiester bonds on the 5' side of AP sites. In addition to endonuclease activity, the AP endonuclease has a proofreading 3'-5' exonuclease activity that is considerably more efficient in the elimination of a mismatch than in that of a correctly paired base. Displays 3'-phosphatase and 3'-repair diesterase activities. The single nucleotide gaps generated by the AP endonuclease are filled by the viral repair DNA polymerase X and the DNA ligase. This chain is Probable AP endonuclease, found in Ornithodoros (relapsing fever ticks).